A 550-amino-acid polypeptide reads, in one-letter code: MADRNDPLLRTPAWRALETHLAEVRPLHLRELFARDPGRGDRLAAEGAGLYLDYSKQRVTEETVRLLVALAEARGLPGRRAAMFRGEKVNATEGRAALHVALRAPRGERIEVDGKDVVPEVHAVLDRMAAFAEQVRSGAWTGFTGRRIRTVVNVGIGGSDLGPAMAYRALRAYTTREIAFRFVSNVDGTDLAEAVRDLDPAETLFLVASKTFTTLETMTNAASARAWLLAALGDERAVARHFVAISTNEAEVRRFGIDPANMFGFWDWVGGRYSMDSAIGLSTMIAVGPGGFRELLAGFRAMDEHFRDAPLERNLPALVGLIGVWNASLLGAETVAVLPYDQYLDRFPAYLQQLTMESNGKRVTASGAPVEGHGTGAIYWGEPGTNGQHSFYQLLHQGTHLVACDFIGFCRTLNPLGRHHDLLMANLFAQGEALAFGKTAEEARAEGTPEALVPHRTFPGNRPSSTILADRLGPGTLGALVALYEHAVFTQGVIWDVDSFDQWGVELGKVLANRIVKELEAPADPALAHDGSTNALIRRYRARRGGSASS.

Glu-357 serves as the catalytic Proton donor. Catalysis depends on residues His-389 and Lys-509.

Belongs to the GPI family.

The protein resides in the cytoplasm. The catalysed reaction is alpha-D-glucose 6-phosphate = beta-D-fructose 6-phosphate. It functions in the pathway carbohydrate biosynthesis; gluconeogenesis. Its pathway is carbohydrate degradation; glycolysis; D-glyceraldehyde 3-phosphate and glycerone phosphate from D-glucose: step 2/4. Functionally, catalyzes the reversible isomerization of glucose-6-phosphate to fructose-6-phosphate. This Anaeromyxobacter dehalogenans (strain 2CP-C) protein is Glucose-6-phosphate isomerase.